Reading from the N-terminus, the 396-residue chain is Protein NDRG1-B (396 aa).

Residues 326 to 396 (RSRTGSAASS…NTPKSMEVSC (71 aa)) form a disordered region. Positions 327–340 (SRTGSAASSSSQDG) are enriched in low complexity. 4 repeat units span residues 340–349 (GNRSRSHTNE), 350–359 (GSRSRSQTGD), 360–369 (GNRSRAHTGD), and 370–379 (GNRSRSHTDT). The segment at 340-379 (GNRSRSHTNEGSRSRSQTGDGNRSRAHTGDGNRSRSHTDT) is 4 X 10 AA tandem repeats of G-[NS]-R-S-R-[AS]-[HQ]-T-[DGN]-[DET]. Basic and acidic residues predominate over residues 366-377 (HTGDGNRSRSHT). Positions 378–390 (DTNNVNSDHNTPK) are enriched in polar residues.

Belongs to the NDRG family.

May be involved in pronephros development, after specification of the pronephros. This Xenopus laevis (African clawed frog) protein is Protein NDRG1-B (ndrg1-b).